Reading from the N-terminus, the 388-residue chain is Plasminogen-binding group A streptococcal M-like protein PAM (388 aa).

An N-terminal signal peptide occupies residues 1–29; it reads RKLKTGTASVAVALTVVGAGLASQTEVKA. Positions 85–113 are able to bind plasminogen; sequence VEKLTADAELQRLKNERHEEAELERLKSE. One copy of the A-1 repeat lies at 91-103; the sequence is DAELQRLKNERHE. The tract at residues 91-116 is 2 X approximate tandem repeats, type a; the sequence is DAELQRLKNERHEEAELERLKSERHD. Basic and acidic residues-rich tracts occupy residues 95-137, 145-168, 176-189, 218-231, and 260-269; these read QRLK…KQEH, INEK…EKQI, LRRD…AKKQ, and LRRDLDASRE. Disordered stretches follow at residues 95 to 189, 204 to 231, and 248 to 269; these read QRLK…AKKQ, VKEE…AKKQ, and EEKQ…ASRE. Residues 104–116 form an A-2 repeat; that stretch reads EAELERLKSERHD. The stretch at 147–153 is one B-1 repeat; that stretch reads EKEAEAK. Positions 147–161 are 2 X tandem repeats, type b; the sequence is EKEAEAKEKEAEQKK. A B-2 repeat occupies 154 to 159; it reads EKEAEQ. C repeat units lie at residues 160–194, 202–236, and 244–278; these read KKLK…EKDL, DKVK…EKGL, and DKVK…EKAL. D repeat units follow at residues 311–316, 317–322, 325–330, and 332–337; these read AKLEAE, AKALKE, AKQAEE, and AKLRAE. A compositionally biased stretch (basic and acidic residues) spans 331 to 340; it reads LAKLRAEKAS. Residues 331-388 are disordered; sequence LAKLRAEKASDSQTPDAKPGNKAVPGKGQAPQAGTKPNQNKAPMKETKRQLPSTGETT. The LPXTG sorting signal signature appears at 381-385; sequence LPSTG. Thr384 carries the pentaglycyl murein peptidoglycan amidated threonine modification. Residues 385–388 constitute a propeptide, removed by sortase; it reads GETT.

It belongs to the M protein family.

Its subcellular location is the secreted. The protein localises to the cell wall. In terms of biological role, binds to human plasminogen (and plasmin) via its kringle repeats. Also binds to albumin, immunoglobulin G and fibrinogen. Could provide the bacteria with a mechanism for invasion, as streptococcal-bound plasmin could permit tissue penetration. The chain is Plasminogen-binding group A streptococcal M-like protein PAM (pam) from Streptococcus pyogenes.